Reading from the N-terminus, the 159-residue chain is Putative viral CXC chemokine 2 (159 aa).

Disulfide bonds link cysteine 50/cysteine 77 and cysteine 52/cysteine 93.

Belongs to the intercrine alpha (chemokine CxC) family.

The chain is Putative viral CXC chemokine 2 (UL147) from Human cytomegalovirus (strain Towne) (HHV-5).